The sequence spans 339 residues: D-erythrose-4-phosphate dehydrogenase (339 aa).

Position 12–13 (12–13 (RI)) interacts with NAD(+). Residues 154–156 (SCT), Arg200, 213–214 (TK), and Arg236 each bind substrate. Residue Cys155 is the Nucleophile of the active site. Asn318 provides a ligand contact to NAD(+).

This sequence belongs to the glyceraldehyde-3-phosphate dehydrogenase family. Epd subfamily. In terms of assembly, homotetramer.

Its subcellular location is the cytoplasm. It catalyses the reaction D-erythrose 4-phosphate + NAD(+) + H2O = 4-phospho-D-erythronate + NADH + 2 H(+). Its pathway is cofactor biosynthesis; pyridoxine 5'-phosphate biosynthesis; pyridoxine 5'-phosphate from D-erythrose 4-phosphate: step 1/5. Catalyzes the NAD-dependent conversion of D-erythrose 4-phosphate to 4-phosphoerythronate. The protein is D-erythrose-4-phosphate dehydrogenase of Photorhabdus laumondii subsp. laumondii (strain DSM 15139 / CIP 105565 / TT01) (Photorhabdus luminescens subsp. laumondii).